We begin with the raw amino-acid sequence, 181 residues long: dTDP-4-dehydrorhamnose 3,5-epimerase (181 aa).

Residues Arg23, Glu28, 47–49 (QDN), and Arg59 each bind substrate. Residue His62 is the Proton acceptor of the active site. Positions 71 and 118 each coordinate substrate. Tyr131 (proton donor) is an active-site residue. Substrate is bound by residues Glu142 and Lys167.

It belongs to the dTDP-4-dehydrorhamnose 3,5-epimerase family. In terms of assembly, homodimer.

It catalyses the reaction dTDP-4-dehydro-6-deoxy-alpha-D-glucose = dTDP-4-dehydro-beta-L-rhamnose. It participates in carbohydrate biosynthesis; dTDP-L-rhamnose biosynthesis. The protein operates within bacterial outer membrane biogenesis; lipopolysaccharide biosynthesis. Its function is as follows. Catalyzes the epimerization of the C3' and C5'positions of dTDP-6-deoxy-D-xylo-4-hexulose, forming dTDP-6-deoxy-L-lyxo-4-hexulose. This is dTDP-4-dehydrorhamnose 3,5-epimerase (rmlC) from Pseudomonas aeruginosa (strain ATCC 15692 / DSM 22644 / CIP 104116 / JCM 14847 / LMG 12228 / 1C / PRS 101 / PAO1).